The primary structure comprises 48 residues: Large ribosomal subunit protein bL32 (48 aa).

This sequence belongs to the bacterial ribosomal protein bL32 family.

This is Large ribosomal subunit protein bL32 from Helicobacter pylori (strain P12).